Reading from the N-terminus, the 429-residue chain is Tol-Pal system protein TolB (429 aa).

Residues 1–28 (MSITPSFSRRSVVSLLAAGAFSSMSAFA) form the signal peptide.

This sequence belongs to the TolB family. In terms of assembly, the Tol-Pal system is composed of five core proteins: the inner membrane proteins TolA, TolQ and TolR, the periplasmic protein TolB and the outer membrane protein Pal. They form a network linking the inner and outer membranes and the peptidoglycan layer.

The protein localises to the periplasm. In terms of biological role, part of the Tol-Pal system, which plays a role in outer membrane invagination during cell division and is important for maintaining outer membrane integrity. The polypeptide is Tol-Pal system protein TolB (Polaromonas naphthalenivorans (strain CJ2)).